Here is a 503-residue protein sequence, read N- to C-terminus: Maturase K (503 aa).

It belongs to the intron maturase 2 family. MatK subfamily.

It localises to the plastid. The protein localises to the chloroplast. Usually encoded in the trnK tRNA gene intron. Probably assists in splicing its own and other chloroplast group II introns. In Caragana arborescens (Siberian pea tree), this protein is Maturase K.